The following is a 213-amino-acid chain: Holliday junction branch migration complex subunit RuvA (213 aa).

The tract at residues 1-64 (MIASVTGEVA…DEAPLLFGFA (64 aa)) is domain I. The interval 65 to 143 (QGDEKEIFTV…LPEPPVQQAN (79 aa)) is domain II. The tract at residues 144-152 (QPQVPVWRD) is flexible linker. A domain III region spans residues 152-213 (DQVVDALTGL…GTTHAPTGRR (62 aa)).

This sequence belongs to the RuvA family. Homotetramer. Forms an RuvA(8)-RuvB(12)-Holliday junction (HJ) complex. HJ DNA is sandwiched between 2 RuvA tetramers; dsDNA enters through RuvA and exits via RuvB. An RuvB hexamer assembles on each DNA strand where it exits the tetramer. Each RuvB hexamer is contacted by two RuvA subunits (via domain III) on 2 adjacent RuvB subunits; this complex drives branch migration. In the full resolvosome a probable DNA-RuvA(4)-RuvB(12)-RuvC(2) complex forms which resolves the HJ.

It is found in the cytoplasm. Its function is as follows. The RuvA-RuvB-RuvC complex processes Holliday junction (HJ) DNA during genetic recombination and DNA repair, while the RuvA-RuvB complex plays an important role in the rescue of blocked DNA replication forks via replication fork reversal (RFR). RuvA specifically binds to HJ cruciform DNA, conferring on it an open structure. The RuvB hexamer acts as an ATP-dependent pump, pulling dsDNA into and through the RuvAB complex. HJ branch migration allows RuvC to scan DNA until it finds its consensus sequence, where it cleaves and resolves the cruciform DNA. This Kocuria rhizophila (strain ATCC 9341 / DSM 348 / NBRC 103217 / DC2201) protein is Holliday junction branch migration complex subunit RuvA.